The primary structure comprises 270 residues: 4-hydroxy-tetrahydrodipicolinate reductase (270 aa).

Residues 8–13 (GAAGRM) and glutamate 34 each bind NAD(+). Arginine 35 lines the NADP(+) pocket. NAD(+) contacts are provided by residues 98–100 (GST) and 122–125 (SPNM). Residue histidine 155 is the Proton donor/acceptor of the active site. Histidine 156 is a (S)-2,3,4,5-tetrahydrodipicolinate binding site. Catalysis depends on lysine 159, which acts as the Proton donor. (S)-2,3,4,5-tetrahydrodipicolinate is bound at residue 165 to 166 (GT).

This sequence belongs to the DapB family.

Its subcellular location is the cytoplasm. The enzyme catalyses (S)-2,3,4,5-tetrahydrodipicolinate + NAD(+) + H2O = (2S,4S)-4-hydroxy-2,3,4,5-tetrahydrodipicolinate + NADH + H(+). It carries out the reaction (S)-2,3,4,5-tetrahydrodipicolinate + NADP(+) + H2O = (2S,4S)-4-hydroxy-2,3,4,5-tetrahydrodipicolinate + NADPH + H(+). Its pathway is amino-acid biosynthesis; L-lysine biosynthesis via DAP pathway; (S)-tetrahydrodipicolinate from L-aspartate: step 4/4. Its function is as follows. Catalyzes the conversion of 4-hydroxy-tetrahydrodipicolinate (HTPA) to tetrahydrodipicolinate. The polypeptide is 4-hydroxy-tetrahydrodipicolinate reductase (Anaeromyxobacter dehalogenans (strain 2CP-C)).